The following is a 682-amino-acid chain: L-type lectin-domain containing receptor kinase VI.2 (682 aa).

Residues 1 to 26 (MGTQRSMFIVSFLFKLFLFLSVHVRA) form the signal peptide. Topologically, residues 27–310 (QRTTTNFAFR…AKKEGLNSQV (284 aa)) are extracellular. A legume-lectin like region spans residues 29 to 277 (TTTNFAFRGF…AHYVMGWSFS (249 aa)). The chain crosses the membrane as a helical span at residues 311-331 (IVMIVALSAVMLVMLVLLFFF). The Cytoplasmic portion of the chain corresponds to 332-682 (VMYKKRLGQE…RVSSTSRISQ (351 aa)). The 275-residue stretch at 367-641 (FKKTGIIGTG…LRYLNGEENV (275 aa)) folds into the Protein kinase domain. Residues 373–381 (IGTGGFGTV) and K395 each bind ATP. The Proton acceptor role is filled by D494.

This sequence in the C-terminal section; belongs to the protein kinase superfamily. Ser/Thr protein kinase family. The protein in the N-terminal section; belongs to the leguminous lectin family. Strongly expressed in the vascular system and trichomes of the leaves. Also expressed in guard cells, anthers, stigmas and germinating seeds, but not found in petals or roots. Increased susceptibility to the bacteria Pseudomonas syringae, characterized by stronger necrotic symptoms and higher bacterial proliferation.

The protein localises to the cell membrane. The enzyme catalyses L-seryl-[protein] + ATP = O-phospho-L-seryl-[protein] + ADP + H(+). It carries out the reaction L-threonyl-[protein] + ATP = O-phospho-L-threonyl-[protein] + ADP + H(+). Functionally, involved in negative regulation of abscisic acid response in seed germination. Involved in resistance response to the pathogenic bacteria Pseudomonas syringae. This is L-type lectin-domain containing receptor kinase VI.2 from Arabidopsis thaliana (Mouse-ear cress).